The chain runs to 322 residues: Beta-ketoacyl-[acyl-carrier-protein] synthase III (322 aa).

Residues Cys113 and His249 contribute to the active site. Residues 250 to 254 (QANVR) form an ACP-binding region. Asn279 is an active-site residue.

The protein belongs to the thiolase-like superfamily. FabH family. As to quaternary structure, homodimer.

It is found in the cytoplasm. The enzyme catalyses malonyl-[ACP] + acetyl-CoA + H(+) = 3-oxobutanoyl-[ACP] + CO2 + CoA. Its pathway is lipid metabolism; fatty acid biosynthesis. Catalyzes the condensation reaction of fatty acid synthesis by the addition to an acyl acceptor of two carbons from malonyl-ACP. Catalyzes the first condensation reaction which initiates fatty acid synthesis and may therefore play a role in governing the total rate of fatty acid production. Possesses both acetoacetyl-ACP synthase and acetyl transacylase activities. Its substrate specificity determines the biosynthesis of branched-chain and/or straight-chain of fatty acids. The polypeptide is Beta-ketoacyl-[acyl-carrier-protein] synthase III (Anaplasma marginale (strain St. Maries)).